Here is a 58-residue protein sequence, read N- to C-terminus: Mu-diguetoxin-Dc1b (58 aa).

4 cysteine pairs are disulfide-bonded: cysteine 12/cysteine 26, cysteine 20/cysteine 40, cysteine 25/cysteine 54, and cysteine 42/cysteine 52.

It belongs to the neurotoxin 26 (DTX) family. As to expression, expressed by the venom gland.

It localises to the secreted. Its function is as follows. Acts by delaying the inactivation of presynaptic voltage-sensitive sodium channels (Nav). Acts against insects and cause a progressive spastic paralysis. The protein is Mu-diguetoxin-Dc1b of Diguetia canities (Desert bush spider).